We begin with the raw amino-acid sequence, 152 residues long: Snaclec coagulation factor IX/factor X-binding protein subunit A (152 aa).

The first 23 residues, 1-23, serve as a signal peptide directing secretion; it reads MGRFIFMSFGLLVVAASLRGTGA. The C-type lectin domain occupies 24–152; the sequence is DCLSGWSSYE…GQQNPFVCEA (129 aa). 3 cysteine pairs are disulfide-bonded: Cys25-Cys36, Cys53-Cys150, and Cys125-Cys142. Ser64, Glu66, and Glu70 together coordinate Ca(2+). Glu151 is a binding site for Ca(2+).

It belongs to the snaclec family. Heterodimer of subunits A and B; disulfide-linked. As to expression, expressed by the venom gland.

The protein resides in the secreted. Functionally, anticoagulant protein which binds to the gamma-carboxyglutamic acid-domain regions of factors IX (F9) and factor X (F10) in the presence of calcium with a 1 to 1 stoichiometry. This chain is Snaclec coagulation factor IX/factor X-binding protein subunit A, found in Protobothrops flavoviridis (Habu).